We begin with the raw amino-acid sequence, 145 residues long: Acidic phospholipase A2 S1-11 (145 aa).

The first 19 residues, 1–19, serve as a signal peptide directing secretion; it reads MYPAHLLVLLAVCVSLLGA. The propeptide occupies 20-27; that stretch reads SDMPPQPL. 5 disulfide bridges follow: Cys38-Cys99, Cys54-Cys144, Cys56-Cys72, Cys71-Cys127, and Cys106-Cys118. Ca(2+) contacts are provided by Tyr55, Gly57, and Gly59. Residue His75 is part of the active site. Asp76 contacts Ca(2+). The active site involves Asp121.

The protein belongs to the phospholipase A2 family. Group I subfamily. D49 sub-subfamily. The cofactor is Ca(2+). Post-translationally, this enzyme lacks two of the seven disulfide bonds found in similar PLA2 proteins. As to expression, expressed by the venom gland.

The protein localises to the secreted. The enzyme catalyses a 1,2-diacyl-sn-glycero-3-phosphocholine + H2O = a 1-acyl-sn-glycero-3-phosphocholine + a fatty acid + H(+). Snake venom phospholipase A2 (PLA2) that inhibits collagen-induced platelet aggregation. PLA2 catalyzes the calcium-dependent hydrolysis of the 2-acyl groups in 3-sn-phosphoglycerides. This Austrelaps superbus (Lowland copperhead snake) protein is Acidic phospholipase A2 S1-11.